Here is a 216-residue protein sequence, read N- to C-terminus: Octanoyltransferase (216 aa).

One can recognise a BPL/LPL catalytic domain in the interval 32-207 (PDSQDEIWLV…QLVKHLDYAE (176 aa)). Residues 71-78 (RGGQVTYH), 138-140 (SLG), and 151-153 (GLA) contribute to the substrate site. The active-site Acyl-thioester intermediate is cysteine 169.

The protein belongs to the LipB family.

It localises to the cytoplasm. The catalysed reaction is octanoyl-[ACP] + L-lysyl-[protein] = N(6)-octanoyl-L-lysyl-[protein] + holo-[ACP] + H(+). It participates in protein modification; protein lipoylation via endogenous pathway; protein N(6)-(lipoyl)lysine from octanoyl-[acyl-carrier-protein]: step 1/2. Its function is as follows. Catalyzes the transfer of endogenously produced octanoic acid from octanoyl-acyl-carrier-protein onto the lipoyl domains of lipoate-dependent enzymes. Lipoyl-ACP can also act as a substrate although octanoyl-ACP is likely to be the physiological substrate. In Pseudomonas putida (strain ATCC 47054 / DSM 6125 / CFBP 8728 / NCIMB 11950 / KT2440), this protein is Octanoyltransferase.